Reading from the N-terminus, the 458-residue chain is V-type sodium ATPase subunit B (458 aa).

It belongs to the ATPase alpha/beta chains family.

Its function is as follows. Involved in ATP-driven sodium extrusion. The polypeptide is V-type sodium ATPase subunit B (ntpB) (Enterococcus hirae (strain ATCC 9790 / DSM 20160 / JCM 8729 / LMG 6399 / NBRC 3181 / NCIMB 6459 / NCDO 1258 / NCTC 12367 / WDCM 00089 / R)).